Here is a 203-residue protein sequence, read N- to C-terminus: Small ribosomal subunit protein uS3 (203 aa).

Residues 39–113 (IREIIRRNFL…NHVLNAKNIA (75 aa)) enclose the KH type-2 domain.

This sequence belongs to the universal ribosomal protein uS3 family. Part of the 30S ribosomal subunit. Forms a tight complex with proteins S10 and S14.

Binds the lower part of the 30S subunit head. Binds mRNA in the 70S ribosome, positioning it for translation. The sequence is that of Small ribosomal subunit protein uS3 from Carsonella ruddii.